The following is a 206-amino-acid chain: N-(5'-phosphoribosyl)anthranilate isomerase (206 aa).

Belongs to the TrpF family.

The catalysed reaction is N-(5-phospho-beta-D-ribosyl)anthranilate = 1-(2-carboxyphenylamino)-1-deoxy-D-ribulose 5-phosphate. The protein operates within amino-acid biosynthesis; L-tryptophan biosynthesis; L-tryptophan from chorismate: step 3/5. The polypeptide is N-(5'-phosphoribosyl)anthranilate isomerase (Pseudomonas syringae pv. tomato (strain ATCC BAA-871 / DC3000)).